A 1131-amino-acid chain; its full sequence is MPSKIEKICLLLLGFTAASNVNAYSHRRAGDTLHHRHKHEKHNDLTDSSYEPLTLSYNDTQIQQLQRRDTVQCAFPYGDKMVAVTPDEGNAGWAMSPDQYCTAGTWCPYACEPGYLMGQWDPNATSYTYPESMYGGLYCNSDGVAVKPFPSKDYCYPGVGDLSVVDQTGDGIAFCQTVLPGNEAMLIPTWVAPDSEQVLAVPDISYWDETAAHYYVNPPGVSTTDGCVWGTSANPYGNWAPYVAGANMDENNITYVKLGANPIYLDDSYWSTVKPTYGLALECEGDTCSGLPCYVDPRENGVQGCPEGSPIGAGGACFCVVGFQQGTTAKIVVVDYSEEMASSSSSASATATSSAESSIATSPITSSSNVVSSISTSSMDSSAVSSYSVVQSSLASIISNAYIATSKSGLNSGVSTLLASPTSSSTFVTSLLRRSSIDGSASSSSASLAVPTVSSSTTGSLHYKTTTTVWVTEVFTRYLGDDSTPVTSSSIFSTATEATDTSVQTSSAIYDSSSTSNIQSSSSVYASSTGALSSNSLSSSTSSVSTSYIPNASSSVYASSTEALSSNSLSSSTSSASTSYIPSASSSYEVASNSSDYYSQTVSSITASGTTSSTSEIVSTPASNSNTGSLNGTSSFNVNSVGPSSSQTTPTSSSSITGSQSLKETSSPAYVSSTVSYTSSSVDSSSTYNSTGSSSSDSQSFSGTTYSDPTTTITSEVSSILSSPTSMQSSVSRPQSSGDASGFNTIFTSISQSSDGETSGYTISSNSSQNSASEPQTAFTSSSSSATPTITQSSISTSVSSQSSMNSSYSSPISSNSVTSSTSIISSIASSSYTSIPSISSIASSFFDASGFTSIYNGTKAGFSSSFALASNSESGASDVLSSTIAKPTFKFSTSNSGSTSYSIPSSSSRNEGTTSYSSNITVTSSTLKPSLTSSVSTASSYIASSASSNTLSTEPKTFSSSSTLSESISSINTNSLTVKPESSLSSSTTSGLTSSSSTIPSSTRSESNSESASTSSASKRSSSSTSLVQSNPVKTVVSLESYKFTTSKISLVKNPTKTYTVTDVETNVVVQTHTVSYVEHSTSYTWVHTTLYEYADVEASTKSTSEPSAKSKRNAVSTFETVFLKSKSSA.

An N-terminal signal peptide occupies residues 1–23 (MPSKIEKICLLLLGFTAASNVNA). 7 N-linked (GlcNAc...) asparagine glycosylation sites follow: Asn-58, Asn-123, Asn-252, Asn-551, Asn-593, Asn-631, and Asn-689. The disordered stretch occupies residues 609 to 819 (GTTSSTSEIV…SSPISSNSVT (211 aa)). Residues 623 to 715 (SNSNTGSLNG…YSDPTTTITS (93 aa)) are compositionally biased toward low complexity. Over residues 716–725 (EVSSILSSPT) the composition is skewed to polar residues. Over residues 726 to 737 (SMQSSVSRPQSS) the composition is skewed to low complexity. Residues 738–763 (GDASGFNTIFTSISQSSDGETSGYTI) are compositionally biased toward polar residues. 2 stretches are compositionally biased toward low complexity: residues 764 to 773 (SSNSSQNSAS) and 780 to 819 (TSSS…NSVT). N-linked (GlcNAc...) asparagine glycosylation is found at Asn-766, Asn-806, and Asn-857. The segment covering 893–909 (STSNSGSTSYSIPSSSS) has biased composition (low complexity). Residues 893–918 (STSNSGSTSYSIPSSSSRNEGTTSYS) are disordered. Asn-920 carries an N-linked (GlcNAc...) asparagine glycan. The segment covering 977 to 1027 (LTVKPESSLSSSTTSGLTSSSSTIPSSTRSESNSESASTSSASKRSSSSTS) has biased composition (low complexity). Residues 977-1031 (LTVKPESSLSSSTTSGLTSSSSTIPSSTRSESNSESASTSSASKRSSSSTSLVQS) form a disordered region.

It belongs to the SUN family.

The protein resides in the secreted. Cell surface beta-glucosidase involved in cell wall biogenesis,. The polypeptide is Probable secreted beta-glucosidase adg3 (adg3) (Schizosaccharomyces pombe (strain 972 / ATCC 24843) (Fission yeast)).